Here is a 242-residue protein sequence, read N- to C-terminus: Large ribosomal subunit protein uL1 (242 aa).

This sequence belongs to the universal ribosomal protein uL1 family. Part of the 50S ribosomal subunit.

In terms of biological role, binds directly to 23S rRNA. The L1 stalk is quite mobile in the ribosome, and is involved in E site tRNA release. Its function is as follows. Protein L1 is also a translational repressor protein, it controls the translation of the L11 operon by binding to its mRNA. The chain is Large ribosomal subunit protein uL1 from Dictyoglomus thermophilum (strain ATCC 35947 / DSM 3960 / H-6-12).